Reading from the N-terminus, the 611-residue chain is Actin-binding LIM protein 2 (611 aa).

LIM zinc-binding domains lie at 22–81 (ILCN…LYGT), 81–141 (TRCF…VSVG), 151–210 (RSCG…KFGI), and 210–270 (IRCD…ARTE). The Zn(2+) site is built by cysteine 83, cysteine 86, histidine 103, cysteine 106, cysteine 109, cysteine 112, cysteine 131, and cysteine 134. Residues cysteine 212, cysteine 215, histidine 232, cysteine 235, cysteine 238, cysteine 241, histidine 260, and cysteine 263 each contribute to the Zn(2+) site. Positions 269–278 (TEDRNKETRT) are enriched in basic and acidic residues. 2 disordered regions span residues 269–295 (TEDRNKETRTSSESIISVPASSTSGSP) and 336–527 (YISH…DQRN). Composition is skewed to low complexity over residues 279 to 295 (SSESIISVPASSTSGSP) and 363 to 372 (SSPSSTGSVS). Serine 282, serine 294, serine 364, and serine 367 each carry phosphoserine. Residues 393 to 404 (SGRSTPSLSVLS) show a composition bias toward polar residues. At serine 452 the chain carries Phosphoserine. Threonine 472 carries the phosphothreonine modification. Positions 473–488 (RTNSPDLDTQSLSHSS) are enriched in polar residues. Phosphoserine occurs at positions 476 and 578. The region spanning 543-611 (MREYKIYPYD…NDLKKKALLF (69 aa)) is the HP domain.

Interacts with F-actin and ABRA. In terms of tissue distribution, highly expressed in skeletal muscle.

It localises to the cytoplasm. In terms of biological role, may act as scaffold protein. May stimulate ABRA activity and ABRA-dependent SRF transcriptional activity. This Homo sapiens (Human) protein is Actin-binding LIM protein 2 (ABLIM2).